Here is a 704-residue protein sequence, read N- to C-terminus: Capsule polysaccharide modification protein LipA (704 aa).

The protein localises to the cell inner membrane. In terms of biological role, involved in the phospholipid modification of the capsular polysaccharide, a strong requirement for its translocation to the cell surface. This is Capsule polysaccharide modification protein LipA (lipA) from Neisseria meningitidis serogroup B (strain ATCC BAA-335 / MC58).